A 110-amino-acid polypeptide reads, in one-letter code: MHEMSFAEAIIRNVLRFAEEKQAKTVTSVRVRVGELLLINPEQLQFCFSVASKGTIAEGAKLEISVERADIRCLLCGRELSKDEMLCECGGFAQVKGGKDFILESVVVEV.

Ni(2+) is bound at residue histidine 2. Cysteine 73, cysteine 76, cysteine 87, and cysteine 89 together coordinate Zn(2+).

This sequence belongs to the HypA/HybF family.

Functionally, involved in the maturation of [NiFe] hydrogenases. Required for nickel insertion into the metal center of the hydrogenase. In Archaeoglobus fulgidus (strain ATCC 49558 / DSM 4304 / JCM 9628 / NBRC 100126 / VC-16), this protein is Hydrogenase maturation factor HypA.